The following is a 348-amino-acid chain: Isopentenyl-diphosphate delta-isomerase (348 aa).

11 to 12 (RK) serves as a coordination point for substrate. Residues 70–72 (AMT), serine 100, and asparagine 131 contribute to the FMN site. 100–102 (SQR) is a substrate binding site. Residue glutamine 165 participates in substrate binding. Mg(2+) is bound at residue glutamate 166. FMN is bound by residues lysine 197, threonine 231, 278-280 (GIR), and 299-300 (AR).

Belongs to the IPP isomerase type 2 family. As to quaternary structure, homooctamer. Dimer of tetramers. FMN serves as cofactor. It depends on NADPH as a cofactor. Requires Mg(2+) as cofactor.

The protein localises to the cytoplasm. The enzyme catalyses isopentenyl diphosphate = dimethylallyl diphosphate. Its function is as follows. Involved in the biosynthesis of isoprenoids. Catalyzes the 1,3-allylic rearrangement of the homoallylic substrate isopentenyl (IPP) to its allylic isomer, dimethylallyl diphosphate (DMAPP). The chain is Isopentenyl-diphosphate delta-isomerase from Mycobacterium marinum (strain ATCC BAA-535 / M).